Here is a 337-residue protein sequence, read N- to C-terminus: Glyceraldehyde-3-phosphate dehydrogenase 2 (337 aa).

NADP(+) contacts are provided by residues 11–12, aspartate 35, arginine 80, and threonine 122; that span reads RI. D-glyceraldehyde 3-phosphate is bound by residues 153–155, threonine 184, arginine 199, 212–213, and arginine 235; these read SCT and TG. Cysteine 154 (nucleophile) is an active-site residue. Asparagine 317 is a binding site for NADP(+).

Belongs to the glyceraldehyde-3-phosphate dehydrogenase family. Homotetramer.

It is found in the cytoplasm. It catalyses the reaction D-glyceraldehyde 3-phosphate + phosphate + NADP(+) = (2R)-3-phospho-glyceroyl phosphate + NADPH + H(+). The enzyme catalyses D-glyceraldehyde 3-phosphate + phosphate + NAD(+) = (2R)-3-phospho-glyceroyl phosphate + NADH + H(+). It functions in the pathway carbohydrate biosynthesis; Calvin cycle. Its function is as follows. Gap2 has a major role in carbon fixation as a component of the Calvin cycle. Catalyzes the oxidative phosphorylation of glyceraldehyde 3-phosphate (G3P) to 1,3-bisphosphoglycerate (BPG) using the cofactor NAD. The first reaction step involves the formation of a hemiacetal intermediate between G3P and a cysteine residue, and this hemiacetal intermediate is then oxidized to a thioester, with concomitant reduction of NAD to NADH. The reduced NADH is then exchanged with the second NAD, and the thioester is attacked by a nucleophilic inorganic phosphate to produce BPG. The sequence is that of Glyceraldehyde-3-phosphate dehydrogenase 2 (gap2) from Trichormus variabilis (strain ATCC 29413 / PCC 7937) (Anabaena variabilis).